Reading from the N-terminus, the 321-residue chain is MTEARPVATERAYPALSREYPADFRVDDSYKASLPDLQNGPASLIVGARAPIQHVGISNFRLPIRYQTQEGGEIALETSVTGTVSLEADRKGINMSRIMRSFYAHAEKQFSMGVLEAALEDYKSDLGSFDARIMMRLSYPMRVESLRSGLSGWQYYDIALELSERAGQRLRIMHFDYVYSSTCPCSLELAEHARQMRGQLATPHSQRSIARISVVMQGDTLWFEDMVTLCRRAVATETQVMVKREDEQAFAELNAANPIFVEDAVRAFAAELMAEPRIGDFRVVASHQESLHSHDAVSVLTQGETFAHASLDPAIFAGLRA.

This sequence belongs to the GTP cyclohydrolase IV family.

It catalyses the reaction GTP + H2O = 7,8-dihydroneopterin 3'-triphosphate + formate + H(+). The protein operates within cofactor biosynthesis; 7,8-dihydroneopterin triphosphate biosynthesis; 7,8-dihydroneopterin triphosphate from GTP: step 1/1. Its function is as follows. Converts GTP to 7,8-dihydroneopterin triphosphate. This chain is GTP cyclohydrolase FolE2, found in Paracoccus denitrificans (strain Pd 1222).